Here is a 214-residue protein sequence, read N- to C-terminus: Ribosomal RNA small subunit methyltransferase G (214 aa).

Residues glycine 72, phenylalanine 77, 125–126 (VE), and arginine 141 each bind S-adenosyl-L-methionine.

Belongs to the methyltransferase superfamily. RNA methyltransferase RsmG family.

It localises to the cytoplasm. It catalyses the reaction guanosine(527) in 16S rRNA + S-adenosyl-L-methionine = N(7)-methylguanosine(527) in 16S rRNA + S-adenosyl-L-homocysteine. Its function is as follows. Specifically methylates the N7 position of guanine in position 527 of 16S rRNA. The protein is Ribosomal RNA small subunit methyltransferase G of Sinorhizobium fredii (strain NBRC 101917 / NGR234).